Reading from the N-terminus, the 515-residue chain is Bifunctional pantoate ligase/cytidylate kinase (515 aa).

The segment at 1–279 is pantoate--beta-alanine ligase; the sequence is MKVVETVARL…VGSTRLIDNV (279 aa). 31 to 38 is a binding site for ATP; the sequence is MGALHEGH. His38 (proton donor) is an active-site residue. Gln62 contacts (R)-pantoate. Gln62 is a binding site for beta-alanine. Residue 149-152 participates in ATP binding; the sequence is GQKD. Gln155 is a (R)-pantoate binding site. ATP-binding positions include Val178 and 186–189; that span reads LSSR. The segment at 280–515 is cytidylate kinase; sequence VLGQHHERRP…LYRDKVGGSV (236 aa).

It in the N-terminal section; belongs to the pantothenate synthetase family. This sequence in the C-terminal section; belongs to the cytidylate kinase family. Type 1 subfamily.

It is found in the cytoplasm. The enzyme catalyses (R)-pantoate + beta-alanine + ATP = (R)-pantothenate + AMP + diphosphate + H(+). The catalysed reaction is CMP + ATP = CDP + ADP. It carries out the reaction dCMP + ATP = dCDP + ADP. The protein operates within cofactor biosynthesis; (R)-pantothenate biosynthesis; (R)-pantothenate from (R)-pantoate and beta-alanine: step 1/1. Catalyzes the condensation of pantoate with beta-alanine in an ATP-dependent reaction via a pantoyl-adenylate intermediate. Functionally, catalyzes the transfer of a phosphate group from ATP to either CMP or dCMP to form CDP or dCDP and ADP, respectively. This chain is Bifunctional pantoate ligase/cytidylate kinase, found in Gloeobacter violaceus (strain ATCC 29082 / PCC 7421).